The sequence spans 236 residues: MREPKNAKVLSRLENVLVTQLDVNNFSSIKKSVEKAISHFGRIDVLLNNAGYSVYSPLESTTEEQIHNIFNTNVFGALEVIKAITPIFRSQHNGMIINVSSIGGKMTFPLGCLYYGTKYAIEGISEALTWEMQSIGVKVKIIEPGFTATEFRVEEGAGKHYAEYDNLKQKLYEDLLPKLKTATPPQKIAEVILQAATDESDELRYPTGDYVVEWMALRSKVDDATFLATHRKQMGL.

3 residues coordinate NADP(+): aspartate 22, asparagine 49, and lysine 82. Active-site proton donor residues include serine 100 and tyrosine 114. The NADP(+) site is built by tyrosine 114 and lysine 118. The active-site Lowers pKa of active site Tyr is lysine 118.

It belongs to the short-chain dehydrogenases/reductases (SDR) family.

The protein resides in the cytoplasm. The protein localises to the nucleus. This is an uncharacterized protein from Schizosaccharomyces pombe (strain 972 / ATCC 24843) (Fission yeast).